A 314-amino-acid polypeptide reads, in one-letter code: Homoserine O-succinyltransferase (314 aa).

The Acyl-thioester intermediate role is filled by cysteine 142. 2 residues coordinate substrate: lysine 163 and serine 192. The active-site Proton acceptor is histidine 235. Glutamate 237 is an active-site residue. Arginine 249 provides a ligand contact to substrate.

This sequence belongs to the MetA family.

Its subcellular location is the cytoplasm. It carries out the reaction L-homoserine + succinyl-CoA = O-succinyl-L-homoserine + CoA. The protein operates within amino-acid biosynthesis; L-methionine biosynthesis via de novo pathway; O-succinyl-L-homoserine from L-homoserine: step 1/1. In terms of biological role, transfers a succinyl group from succinyl-CoA to L-homoserine, forming succinyl-L-homoserine. The polypeptide is Homoserine O-succinyltransferase (Aeromonas salmonicida (strain A449)).